The primary structure comprises 346 residues: GTPase Obg (346 aa).

Positions 1–159 (MKFLDEAKVY…RWIWLRLKLI (159 aa)) constitute an Obg domain. Residues 160 to 327 (ADAGLVGLPN…ALRALVAVIG (168 aa)) form the OBG-type G domain. Residues 166–173 (GLPNAGKS), 191–195 (FTTLH), 212–215 (DIPG), 279–282 (NKID), and 308–310 (SAA) contribute to the GTP site. Positions 173 and 193 each coordinate Mg(2+).

Belongs to the TRAFAC class OBG-HflX-like GTPase superfamily. OBG GTPase family. As to quaternary structure, monomer. Mg(2+) serves as cofactor.

Its subcellular location is the cytoplasm. Its function is as follows. An essential GTPase which binds GTP, GDP and possibly (p)ppGpp with moderate affinity, with high nucleotide exchange rates and a fairly low GTP hydrolysis rate. Plays a role in control of the cell cycle, stress response, ribosome biogenesis and in those bacteria that undergo differentiation, in morphogenesis control. The chain is GTPase Obg from Bradyrhizobium diazoefficiens (strain JCM 10833 / BCRC 13528 / IAM 13628 / NBRC 14792 / USDA 110).